We begin with the raw amino-acid sequence, 84 residues long: Cell division topological specificity factor (84 aa).

It belongs to the MinE family.

Prevents the cell division inhibition by proteins MinC and MinD at internal division sites while permitting inhibition at polar sites. This ensures cell division at the proper site by restricting the formation of a division septum at the midpoint of the long axis of the cell. The chain is Cell division topological specificity factor from Paraburkholderia xenovorans (strain LB400).